The chain runs to 302 residues: Putative S-adenosyl-L-methionine-dependent methyltransferase MAV_2803 (302 aa).

Residues D129 and 158–159 contribute to the S-adenosyl-L-methionine site; that span reads DL.

The protein belongs to the UPF0677 family.

Its function is as follows. Exhibits S-adenosyl-L-methionine-dependent methyltransferase activity. This is Putative S-adenosyl-L-methionine-dependent methyltransferase MAV_2803 from Mycobacterium avium (strain 104).